A 131-amino-acid chain; its full sequence is Ribosome-binding factor A (131 aa).

Belongs to the RbfA family. In terms of assembly, monomer. Binds 30S ribosomal subunits, but not 50S ribosomal subunits or 70S ribosomes.

The protein localises to the cytoplasm. In terms of biological role, one of several proteins that assist in the late maturation steps of the functional core of the 30S ribosomal subunit. Associates with free 30S ribosomal subunits (but not with 30S subunits that are part of 70S ribosomes or polysomes). Required for efficient processing of 16S rRNA. May interact with the 5'-terminal helix region of 16S rRNA. The polypeptide is Ribosome-binding factor A (Picosynechococcus sp. (strain ATCC 27264 / PCC 7002 / PR-6) (Agmenellum quadruplicatum)).